Consider the following 202-residue polypeptide: Na(+)-translocating NADH-quinone reductase subunit E (202 aa).

Transmembrane regions (helical) follow at residues Ala-11 to Ile-31, Val-35 to Val-55, Leu-79 to Glu-99, Gly-114 to Val-134, Thr-144 to Ile-164, and Leu-180 to Val-200.

The protein belongs to the NqrDE/RnfAE family. Composed of six subunits; NqrA, NqrB, NqrC, NqrD, NqrE and NqrF.

Its subcellular location is the cell inner membrane. The enzyme catalyses a ubiquinone + n Na(+)(in) + NADH + H(+) = a ubiquinol + n Na(+)(out) + NAD(+). NQR complex catalyzes the reduction of ubiquinone-1 to ubiquinol by two successive reactions, coupled with the transport of Na(+) ions from the cytoplasm to the periplasm. NqrA to NqrE are probably involved in the second step, the conversion of ubisemiquinone to ubiquinol. The sequence is that of Na(+)-translocating NADH-quinone reductase subunit E from Ectopseudomonas mendocina (strain ymp) (Pseudomonas mendocina).